Reading from the N-terminus, the 1120-residue chain is ELKS/Rab6-interacting/CAST family member 1 (1120 aa).

Residues 1 to 54 (MYGSARSVGKVEPSSQSPGRSPRLPRSPRLGHRRTNSTGGSSGNSVGGGSGKTL) form a disordered region. Lys-10 is subject to N6-acetyllysine. Residues 13–28 (PSSQSPGRSPRLPRSP) are compositionally biased toward low complexity. Residues Ser-17, Ser-21, and Ser-37 each carry the phosphoserine modification. Thr-38 carries the phosphothreonine modification. Residues 40–51 (GSSGNSVGGGSG) are compositionally biased toward gly residues. Phosphoserine is present on residues Ser-55, Ser-75, Ser-94, Ser-824, Leu-965, and Ser-1009. The stretch at 144 to 992 (RQARDNTIMD…RMKLMADNYE (849 aa)) forms a coiled coil. Residues 801–824 (KHKEQVEKKKSAQMLEEARRREDS) show a composition bias toward basic and acidic residues. Residues 801 to 840 (KHKEQVEKKKSAQMLEEARRREDSLSDSSQQLQDSLRKKD) form a disordered region. Thr-1050 carries the post-translational modification Phosphothreonine. Residues 1050–1112 (TPPASYNADG…DHCPDILEQV (63 aa)) form the FIP-RBD domain. Residues 1060–1104 (EQAAWENELQQMTQEQLQNELEKVEGDNAELQEFANTILQQIADH) are a coiled coil.

As to quaternary structure, interacts with the GTB-bound forms of RAB6A isoform 1 and isoform 2 and with RAB6B. The interaction was strongest with RAB6B, followed by RAB6A isoform 2 and weakest with RAB6A isoform 1. Part of a complex with CHUK, IKBKB and IKBKG. Interacts with CHUK, IKBKB and IKBKG. The interaction with IKBKG is independent of CHUK and IKBKB. Interacts with NFKBIA. Isoform 2 interacts through its C-terminus with the PDZ domains of RIMS1 and RIMS2. Interacts with ERC2/CAST1. Interacts with SDCCAG8. Part of a cortical microtubule stabilization complex (CMSC) composed of KANK1, PPFIA1, PPFIBP1, ERC1/ELKS, PHLDB2/LL5beta, CLASPs, KIF21A and possibly additional interactors; within CMSCs KANK1 and PHLDB2/LL5beta appear to be the core components for targeting of microtubule-binding proteins KIF21A and CLASPs, whereas PPFIA1, PPFIBP1 and ERC1/ELKS serve as scaffolds for protein clustering. Widely expressed.

It localises to the cytoplasm. The protein localises to the cytoskeleton. The protein resides in the microtubule organizing center. Its subcellular location is the centrosome. It is found in the membrane. It localises to the golgi apparatus membrane. The protein localises to the presynaptic active zone. The protein resides in the cell projection. Its subcellular location is the podosome. Regulatory subunit of the IKK complex. Probably recruits IkappaBalpha/NFKBIA to the complex. May be involved in the organization of the cytomatrix at the nerve terminals active zone (CAZ) which regulates neurotransmitter release. May be involved in vesicle trafficking at the CAZ. May be involved in Rab-6 regulated endosomes to Golgi transport. The chain is ELKS/Rab6-interacting/CAST family member 1 from Mus musculus (Mouse).